A 165-amino-acid chain; its full sequence is Phosphopantetheine adenylyltransferase (165 aa).

Ser10 is a binding site for substrate. Residues 10–11 (SF) and His18 contribute to the ATP site. Residues Lys42, Leu74, and Arg88 each coordinate substrate. ATP is bound by residues 89–91 (GLR), Glu99, and 124–130 (WFYTSST).

Belongs to the bacterial CoaD family. As to quaternary structure, homohexamer. Requires Mg(2+) as cofactor.

The protein localises to the cytoplasm. The catalysed reaction is (R)-4'-phosphopantetheine + ATP + H(+) = 3'-dephospho-CoA + diphosphate. The protein operates within cofactor biosynthesis; coenzyme A biosynthesis; CoA from (R)-pantothenate: step 4/5. In terms of biological role, reversibly transfers an adenylyl group from ATP to 4'-phosphopantetheine, yielding dephospho-CoA (dPCoA) and pyrophosphate. In Syntrophus aciditrophicus (strain SB), this protein is Phosphopantetheine adenylyltransferase.